The following is a 440-amino-acid chain: Suppressor of cytokine signaling 4 (440 aa).

The span at 1 to 11 (MAENSESNSKN) shows a compositional bias: polar residues. The tract at residues 1 to 29 (MAENSESNSKNVDVRPKTSRSRSADRKDG) is disordered. Basic and acidic residues predominate over residues 12–29 (VDVRPKTSRSRSADRKDG). The SH2 domain occupies 286-381 (CYWGVMDKYA…FFEPLLSTPL (96 aa)). The SOCS box domain maps to 376–425 (LLSTPLIRTFPFSLQHICRTVICNCTTYDGIDALPIPSSMKLYLKEYHYK).

The protein operates within protein modification; protein ubiquitination. Its function is as follows. SOCS family proteins form part of a classical negative feedback system that regulates cytokine signal transduction. Substrate-recognition component of a SCF-like ECS (Elongin BC-CUL2/5-SOCS-box protein) E3 ubiquitin-protein ligase complex which mediates the ubiquitination and subsequent proteasomal degradation of target proteins. Inhibits EGF signaling by mediating the degradation of the Tyr-phosphorylated EGF receptor/EGFR. The polypeptide is Suppressor of cytokine signaling 4 (SOCS4) (Bos taurus (Bovine)).